The following is a 128-amino-acid chain: Ribosome-binding factor A (128 aa).

It belongs to the RbfA family. As to quaternary structure, monomer. Binds 30S ribosomal subunits, but not 50S ribosomal subunits or 70S ribosomes.

It is found in the cytoplasm. Functionally, one of several proteins that assist in the late maturation steps of the functional core of the 30S ribosomal subunit. Associates with free 30S ribosomal subunits (but not with 30S subunits that are part of 70S ribosomes or polysomes). Required for efficient processing of 16S rRNA. May interact with the 5'-terminal helix region of 16S rRNA. The chain is Ribosome-binding factor A from Herminiimonas arsenicoxydans.